The chain runs to 213 residues: uncharacterized protein (213 aa).

S-adenosyl-L-methionine-binding residues include Gly53, Glu74, and Asp96.

It belongs to the methyltransferase superfamily. YrrT family.

Functionally, could be a S-adenosyl-L-methionine-dependent methyltransferase. This is an uncharacterized protein from Oceanobacillus iheyensis (strain DSM 14371 / CIP 107618 / JCM 11309 / KCTC 3954 / HTE831).